The sequence spans 330 residues: Peptide transport system ATP-binding protein SapD (330 aa).

One can recognise an ABC transporter domain in the interval 6 to 259; that stretch reads IRNLTIEFKT…PHHPYTQALI (254 aa). An ATP-binding site is contributed by 40–47; the sequence is GESGSGKS.

Belongs to the ABC transporter superfamily.

It localises to the cell inner membrane. Its function is as follows. Involved in a peptide intake transport system that plays a role in the resistance to antimicrobial peptides. In Escherichia coli O157:H7, this protein is Peptide transport system ATP-binding protein SapD (sapD).